The chain runs to 101 residues: NAD(P)H-quinone oxidoreductase subunit 4L, chloroplastic (101 aa).

3 consecutive transmembrane segments (helical) span residues 2-22 (MLEH…YGLI), 32-52 (MCLE…SDFF), and 61-81 (IFSI…LAIV).

It belongs to the complex I subunit 4L family. As to quaternary structure, NDH is composed of at least 16 different subunits, 5 of which are encoded in the nucleus.

Its subcellular location is the plastid. It is found in the chloroplast thylakoid membrane. It carries out the reaction a plastoquinone + NADH + (n+1) H(+)(in) = a plastoquinol + NAD(+) + n H(+)(out). The enzyme catalyses a plastoquinone + NADPH + (n+1) H(+)(in) = a plastoquinol + NADP(+) + n H(+)(out). Its function is as follows. NDH shuttles electrons from NAD(P)H:plastoquinone, via FMN and iron-sulfur (Fe-S) centers, to quinones in the photosynthetic chain and possibly in a chloroplast respiratory chain. The immediate electron acceptor for the enzyme in this species is believed to be plastoquinone. Couples the redox reaction to proton translocation, and thus conserves the redox energy in a proton gradient. The protein is NAD(P)H-quinone oxidoreductase subunit 4L, chloroplastic of Cicer arietinum (Chickpea).